The chain runs to 535 residues: T-box transcription factor TBX21 (535 aa).

The disordered stretch occupies residues 1–62; the sequence is MGIVEPGCGD…SLGSPYPGGA (62 aa). The residue at position 53 (serine 53) is a Phosphoserine. Position 77 is a phosphotyrosine (tyrosine 77). Positions 83 to 109 are disordered; the sequence is AAGFPGAGESFPPPADAEGYQPGEGYA. Tyrosine 118 bears the Phosphotyrosine mark. The segment at residues 141 to 326 is a DNA-binding region (T-box); that stretch reads LNNHLLWSKF…NNPFAKGFRE (186 aa). Tyrosine 220 carries the post-translational modification Phosphotyrosine; by ABL1. At serine 225 the chain carries Phosphoserine. Residue tyrosine 266 is modified to Phosphotyrosine; by ABL1. Threonine 303 is subject to Phosphothreonine. A Phosphotyrosine; by ABL1 modification is found at tyrosine 305. Residue lysine 314 forms a Glycyl lysine isopeptide (Lys-Gly) (interchain with G-Cter in ubiquitin) linkage. A disordered region spans residues 449-535; it reads RPMRTLPMEP…EGQFYNYFPN (87 aa). A compositionally biased stretch (low complexity) spans 503 to 520; sequence SPYPSSGDSSSPAGAPSP. Serine 513 is subject to Phosphoserine. Tyrosine 530 carries the phosphotyrosine; by ITK modification.

In terms of assembly, interacts with RUNX1, RUNX3, ITK, ABL1, RELA, CDK9 and KDM6B. The phosphorylated form (at Thr-303) interacts with NFATC2. Interacts with SMARCA4 in a KDM6B-dependent manner. Interacts with CCTN1. Interacts with USP10. The phosphorylated form (at Tyr-530) interacts with GATA3. In terms of processing, phosphorylations at Ser-53, Tyr-77, Ser-225 and Ser-513 are regulated by mTORC1. Phosphorylation at Tyr-530 is essential for its interaction GATA3. Phosphorylation at Tyr-220, Tyr-266 and Tyr-305 enhances its transcriptional activator activity. Phosphorylation at Thr-303 is required for its interaction with NFATC2. Post-translationally, ubiquitinated at Lys-314, leading to its degradation by the proteasome. Ubiquitination is essential for controlling protein stability, binding to the T-box-binding element of the IFN-gamma promoter, and for interaction with NFATC2 through induction of phosphorylation at Thr-303. Deubiquitinated by USP10 leading to its stabilization. As to expression, T-cell specific.

It is found in the nucleus. Lineage-defining transcription factor which initiates Th1 lineage development from naive Th precursor cells both by activating Th1 genetic programs and by repressing the opposing Th2 and Th17 genetic programs. Activates transcription of a set of genes important for Th1 cell function, including those encoding IFN-gamma and the chemokine receptor CXCR3. Induces permissive chromatin accessibilty and CpG methylation in IFNG. Activates IFNG and CXCR3 genes in part by recruiting chromatin remodeling complexes including KDM6B, a SMARCA4-containing SWI/SNF-complex, and an H3K4me2-methyltransferase complex to their promoters and all of these complexes serve to establish a more permissive chromatin state conducive with transcriptional activation. Can activate Th1 genes also via recruitment of Mediator complex and P-TEFb (composed of CDK9 and CCNT1/cyclin-T1) in the form of the super elongation complex (SEC) to super-enhancers and associated genes in activated Th1 cells. Inhibits the Th17 cell lineage commitment by blocking RUNX1-mediated transactivation of Th17 cell-specific transcriptinal regulator RORC. Inhibits the Th2 cell lineage commitment by suppressing the production of Th2 cytokines, such as IL-4, IL-5, and IL- 13, via repression of transcriptional regulators GATA3 and NFATC2. Protects Th1 cells from amplifying aberrant type-I IFN response in an IFN-gamma abundant microenvironment by acting as a repressor of type-I IFN transcription factors and type-I IFN-stimulated genes. Acts as a regulator of antiviral B-cell responses; controls chronic viral infection by promoting the antiviral antibody IgG2a isotype switching and via regulation of a broad antiviral gene expression program. Required for the correct development of natural killer (NK) and mucosal-associated invariant T (MAIT) cells. This Homo sapiens (Human) protein is T-box transcription factor TBX21 (TBX21).